The primary structure comprises 69 residues: uncharacterized protein (69 aa).

A signal peptide spans 1–16 (MSLGLIFALLLTHAAA).

This is an uncharacterized protein from Archaeoglobus fulgidus (strain ATCC 49558 / DSM 4304 / JCM 9628 / NBRC 100126 / VC-16).